A 983-amino-acid chain; its full sequence is Alanine--tRNA ligase, mitochondrial (983 aa).

Residues 1 to 24 (MTSTTGLRNLTLSFKKQLTTSTRT) constitute a mitochondrion transit peptide. Phosphoserine is present on serine 504. Positions 625, 629, 744, and 748 each coordinate Zn(2+). Serine 975 carries the post-translational modification Phosphoserine.

Belongs to the class-II aminoacyl-tRNA synthetase family. Monomer. The cofactor is Zn(2+).

It localises to the cytoplasm. It is found in the mitochondrion. It carries out the reaction tRNA(Ala) + L-alanine + ATP = L-alanyl-tRNA(Ala) + AMP + diphosphate. Its function is as follows. Catalyzes the attachment of alanine to tRNA(Ala) in a two-step reaction: alanine is first activated by ATP to form Ala-AMP and then transferred to the acceptor end of tRNA(Ala). Also edits incorrectly charged tRNA(Ala) via its editing domain. The sequence is that of Alanine--tRNA ligase, mitochondrial from Saccharomyces cerevisiae (strain ATCC 204508 / S288c) (Baker's yeast).